The primary structure comprises 96 residues: ASNSD1 upstream open reading frame protein (96 aa).

The segment covering 1–10 (MPSRGTRPED) has biased composition (basic and acidic residues). Residues 1–28 (MPSRGTRPEDSSVLIPTDNSTPHKEDLS) are disordered. The stretch at 23 to 96 (HKEDLSSKIK…ENLDKTKIKK (74 aa)) forms a coiled coil.

Component of the PAQosome complex which is responsible for the biogenesis of several protein complexes and which consists of R2TP complex members RUVBL1, RUVBL2, RPAP3 and PIH1D1, URI complex members PFDN2, PFDN6, PDRG1, UXT and URI1 as well as ASDURF, POLR2E and DNAAF10/WDR92.

The protein resides in the cytoplasm. This Homo sapiens (Human) protein is ASNSD1 upstream open reading frame protein.